We begin with the raw amino-acid sequence, 364 residues long: MQDRQKAQDYRALLLADTPLIDVRAPIEFEQGAMPGAINLPLMMDDERAAVGTCYKRQGADAALALGHRLVCGDIRQQRLEAWKAAYQRFPNGYLCCARGGQRSHIVQRWLQETGIDCPLIEGGYKALRQTAIQATWQLAQKPILLIGGCTGSGKTQLVRQQPNGVDLEGLARHRGSSFGRTLNPQLSQASFENKLAVELLKINARQTLKRWVLEDEGRTIGANHLPECLRERMAQAPIAVVEDPFALRLERLREEYFIRMHHDFTHAYGDEAGWQAYSEYLHHGLFAIRRRLGLQRFAELTDTLDRALAEQLSSGSTDGHMAWLVPLLNEYYDPMYRYQLEKKAANIVFRGTWQEVANWLKAQ.

Residues 14-137 (LLADTPLIDV…LRQTAIQATW (124 aa)) enclose the Rhodanese domain. Cys97 (S-selanylcysteine intermediate) is an active-site residue.

The protein belongs to the SelU family. In terms of assembly, monomer.

It carries out the reaction 5-methylaminomethyl-2-thiouridine(34) in tRNA + selenophosphate + (2E)-geranyl diphosphate + H2O + H(+) = 5-methylaminomethyl-2-selenouridine(34) in tRNA + (2E)-thiogeraniol + phosphate + diphosphate. The enzyme catalyses 5-methylaminomethyl-2-thiouridine(34) in tRNA + (2E)-geranyl diphosphate = 5-methylaminomethyl-S-(2E)-geranyl-thiouridine(34) in tRNA + diphosphate. It catalyses the reaction 5-methylaminomethyl-S-(2E)-geranyl-thiouridine(34) in tRNA + selenophosphate + H(+) = 5-methylaminomethyl-2-(Se-phospho)selenouridine(34) in tRNA + (2E)-thiogeraniol. The catalysed reaction is 5-methylaminomethyl-2-(Se-phospho)selenouridine(34) in tRNA + H2O = 5-methylaminomethyl-2-selenouridine(34) in tRNA + phosphate. Functionally, involved in the post-transcriptional modification of the uridine at the wobble position (U34) of tRNA(Lys), tRNA(Glu) and tRNA(Gln). Catalyzes the conversion of 2-thiouridine (S2U-RNA) to 2-selenouridine (Se2U-RNA). Acts in a two-step process involving geranylation of 2-thiouridine (S2U) to S-geranyl-2-thiouridine (geS2U) and subsequent selenation of the latter derivative to 2-selenouridine (Se2U) in the tRNA chain. The polypeptide is tRNA 2-selenouridine synthase (Salmonella enteritidis PT4 (strain P125109)).